The following is a 199-amino-acid chain: Photosystem II D1 precursor processing protein PSB27-H2, chloroplastic (199 aa).

This sequence belongs to the Psb27 family. As to quaternary structure, interacts with the C-terminus of both the precursor and mature form of D1.

It localises to the plastid. The protein localises to the chloroplast thylakoid lumen. Its function is as follows. Required, but not essential, for D1 (psbA) precursor processing and thus correct photosystem II assembly (PSII). In Arabidopsis thaliana (Mouse-ear cress), this protein is Photosystem II D1 precursor processing protein PSB27-H2, chloroplastic (PSB27-2).